The primary structure comprises 199 residues: Recombination protein RecR (199 aa).

A C4-type zinc finger spans residues 57-72 (CQQCRTFTEQNLCAIC). A Toprim domain is found at 81 to 176 (GMICVVEMPV…KVSRIAHGVP (96 aa)).

It belongs to the RecR family.

Functionally, may play a role in DNA repair. It seems to be involved in an RecBC-independent recombinational process of DNA repair. It may act with RecF and RecO. This chain is Recombination protein RecR, found in Psychromonas ingrahamii (strain DSM 17664 / CCUG 51855 / 37).